A 218-amino-acid chain; its full sequence is Small ribosomal subunit protein uS3 (218 aa).

The KH type-2 domain maps to I38–K106.

The protein belongs to the universal ribosomal protein uS3 family. In terms of assembly, part of the 30S ribosomal subunit. Forms a tight complex with proteins S10 and S14.

In terms of biological role, binds the lower part of the 30S subunit head. Binds mRNA in the 70S ribosome, positioning it for translation. The sequence is that of Small ribosomal subunit protein uS3 from Ligilactobacillus salivarius (strain UCC118) (Lactobacillus salivarius).